A 331-amino-acid chain; its full sequence is Ferredoxin--NADP reductase 2 (331 aa).

Glu37, Gln45, Tyr50, Val90, Phe124, Asp286, and Thr327 together coordinate FAD.

This sequence belongs to the ferredoxin--NADP reductase type 2 family. In terms of assembly, homodimer. The cofactor is FAD.

It carries out the reaction 2 reduced [2Fe-2S]-[ferredoxin] + NADP(+) + H(+) = 2 oxidized [2Fe-2S]-[ferredoxin] + NADPH. The polypeptide is Ferredoxin--NADP reductase 2 (Listeria innocua serovar 6a (strain ATCC BAA-680 / CLIP 11262)).